A 247-amino-acid chain; its full sequence is ATP synthase subunit a, chloroplastic (247 aa).

5 helical membrane passes run 38 to 58 (QVLI…AIAV), 95 to 115 (VPFI…GALL), 134 to 154 (INTT…AGLT), 199 to 219 (LVVV…VMFL), and 220 to 240 (GLFT…AYIG).

It belongs to the ATPase A chain family. F-type ATPases have 2 components, CF(1) - the catalytic core - and CF(0) - the membrane proton channel. CF(1) has five subunits: alpha(3), beta(3), gamma(1), delta(1), epsilon(1). CF(0) has four main subunits: a, b, b' and c.

It localises to the plastid. It is found in the chloroplast thylakoid membrane. Key component of the proton channel; it plays a direct role in the translocation of protons across the membrane. The protein is ATP synthase subunit a, chloroplastic (atpI) of Spinacia oleracea (Spinach).